Consider the following 360-residue polypeptide: UDP-N-acetylglucosamine--N-acetylmuramyl-(pentapeptide) pyrophosphoryl-undecaprenol N-acetylglucosamine transferase (360 aa).

UDP-N-acetyl-alpha-D-glucosamine-binding positions include 16–18, asparagine 128, arginine 165, serine 191, isoleucine 247, 266–271, and glutamine 292; these read TGG and ALTVSE.

It belongs to the glycosyltransferase 28 family. MurG subfamily.

It is found in the cell inner membrane. It catalyses the reaction di-trans,octa-cis-undecaprenyl diphospho-N-acetyl-alpha-D-muramoyl-L-alanyl-D-glutamyl-meso-2,6-diaminopimeloyl-D-alanyl-D-alanine + UDP-N-acetyl-alpha-D-glucosamine = di-trans,octa-cis-undecaprenyl diphospho-[N-acetyl-alpha-D-glucosaminyl-(1-&gt;4)]-N-acetyl-alpha-D-muramoyl-L-alanyl-D-glutamyl-meso-2,6-diaminopimeloyl-D-alanyl-D-alanine + UDP + H(+). The protein operates within cell wall biogenesis; peptidoglycan biosynthesis. Functionally, cell wall formation. Catalyzes the transfer of a GlcNAc subunit on undecaprenyl-pyrophosphoryl-MurNAc-pentapeptide (lipid intermediate I) to form undecaprenyl-pyrophosphoryl-MurNAc-(pentapeptide)GlcNAc (lipid intermediate II). The polypeptide is UDP-N-acetylglucosamine--N-acetylmuramyl-(pentapeptide) pyrophosphoryl-undecaprenol N-acetylglucosamine transferase (Shewanella amazonensis (strain ATCC BAA-1098 / SB2B)).